A 144-amino-acid polypeptide reads, in one-letter code: Large ribosomal subunit protein uL15 (144 aa).

The segment at 1 to 51 is disordered; that stretch reads MELNSIKPGSGSKHAKRRVGRGIGSGLGKTAGRGHKGQKSRAGGYHKVGFE. Over residues 21 to 31 the composition is skewed to gly residues; it reads RGIGSGLGKTA.

It belongs to the universal ribosomal protein uL15 family. In terms of assembly, part of the 50S ribosomal subunit.

Binds to the 23S rRNA. The chain is Large ribosomal subunit protein uL15 from Leptothrix cholodnii (strain ATCC 51168 / LMG 8142 / SP-6) (Leptothrix discophora (strain SP-6)).